The chain runs to 675 residues: Transketolase, chloroplastic (675 aa).

Thiamine diphosphate is bound by residues histidine 78 and 127 to 129 (GPL). Position 168 (aspartate 168) interacts with Mg(2+). Thiamine diphosphate contacts are provided by glycine 169, glutamate 173, and asparagine 198. The Mg(2+) site is built by asparagine 198 and isoleucine 200. Position 275 (histidine 275) interacts with thiamine diphosphate. Histidine 275, arginine 369, and serine 396 together coordinate substrate. Thiamine diphosphate contacts are provided by residues glutamate 423 and 450–453 (FTDY). Glutamate 423 functions as the Proton donor in the catalytic mechanism. Residues histidine 474, aspartate 482, and arginine 533 each contribute to the substrate site.

In terms of assembly, homodimer. The cofactor is Mg(2+). Ca(2+) is required as a cofactor. Mn(2+) serves as cofactor. Requires Co(2+) as cofactor. It depends on thiamine diphosphate as a cofactor.

It is found in the plastid. It localises to the chloroplast thylakoid membrane. It carries out the reaction D-sedoheptulose 7-phosphate + D-glyceraldehyde 3-phosphate = aldehydo-D-ribose 5-phosphate + D-xylulose 5-phosphate. The protein operates within carbohydrate biosynthesis; Calvin cycle. Catalyzes the reversible transfer of a two-carbon ketol group from fructose-6-phosphate or sedoheptulose-7-phosphate to glyceraldehyde-3-phosphate to yield xylulose-5-phosphate and erythrose-4-phosphate or ribose-5-phosphate, respectively. In Zea mays (Maize), this protein is Transketolase, chloroplastic.